Consider the following 497-residue polypeptide: Putative glucuronosyltransferase PGSIP8 (497 aa).

Residues 3 to 23 traverse the membrane as a helical segment; that stretch reads LQRGFVFLSLVLSFMIIETTA. Mn(2+) contacts are provided by Asp-165 and Asp-167. 5 consecutive transmembrane segments (helical) span residues 319-339, 365-385, 388-408, 418-438, and 442-462; these read YSAEMPLVIIQAMFYLGIIVV, GFKLIALLSVVAAYIFPFFTI, TIHPLIGWSLYLMASFALSSI, LPVLTPWLGILGTLLVMAFPW, and GVVRALSVFAYAFCCAPFVWV.

Belongs to the glycosyltransferase 8 family. Glycogenin subfamily. Mn(2+) serves as cofactor.

Its subcellular location is the membrane. The sequence is that of Putative glucuronosyltransferase PGSIP8 (PGSIP8) from Arabidopsis thaliana (Mouse-ear cress).